The chain runs to 199 residues: Superoxide dismutase [Fe] (199 aa).

Positions 27, 79, 161, and 165 each coordinate Fe cation.

This sequence belongs to the iron/manganese superoxide dismutase family. As to quaternary structure, homodimer. Fe cation is required as a cofactor.

It carries out the reaction 2 superoxide + 2 H(+) = H2O2 + O2. In terms of biological role, destroys superoxide anion radicals which are normally produced within the cells and which are toxic to biological systems. In Synechocystis sp. (strain ATCC 27184 / PCC 6803 / Kazusa), this protein is Superoxide dismutase [Fe] (sodB).